A 102-amino-acid chain; its full sequence is Large ribosomal subunit protein uL24 (102 aa).

Belongs to the universal ribosomal protein uL24 family. In terms of assembly, part of the 50S ribosomal subunit.

Functionally, one of two assembly initiator proteins, it binds directly to the 5'-end of the 23S rRNA, where it nucleates assembly of the 50S subunit. In terms of biological role, one of the proteins that surrounds the polypeptide exit tunnel on the outside of the subunit. This Ralstonia pickettii (strain 12J) protein is Large ribosomal subunit protein uL24.